A 309-amino-acid polypeptide reads, in one-letter code: Uracil phosphoribosyltransferase homolog (309 aa).

Residues 1–41 (MATELQCPDSMPCHNQQVNSASTPSPEQLRPGDPILDHAGG) form a disordered region. The segment covering 13-26 (CHNQQVNSASTPSP) has biased composition (polar residues). A Phosphoserine modification is found at serine 25. GTP is bound by residues arginine 133, arginine 142, and 176 to 179 (EKGN). 5-phospho-alpha-D-ribose 1-diphosphate is bound at residue arginine 186. GTP contacts are provided by arginine 203 and arginine 232. Residue 238–246 (YPILSTGNT) coordinates 5-phospho-alpha-D-ribose 1-diphosphate. 299–301 (THF) contacts uracil.

This sequence belongs to the UPRTase family.

Its subcellular location is the cytoplasm. The protein localises to the nucleus. This is Uracil phosphoribosyltransferase homolog (UPRT) from Macaca fascicularis (Crab-eating macaque).